Consider the following 341-residue polypeptide: Glyceraldehyde-3-phosphate dehydrogenase 3.1 (341 aa).

NAD(+) is bound by residues 13–14 (RI), aspartate 35, and arginine 85. Residues 157-159 (SCT), threonine 188, 217-218 (TG), and arginine 240 each bind D-glyceraldehyde 3-phosphate. Cysteine 158 serves as the catalytic Nucleophile. Asparagine 322 is an NAD(+) binding site.

This sequence belongs to the glyceraldehyde-3-phosphate dehydrogenase family. As to quaternary structure, homotetramer.

The protein resides in the cytoplasm. It catalyses the reaction D-glyceraldehyde 3-phosphate + phosphate + NAD(+) = (2R)-3-phospho-glyceroyl phosphate + NADH + H(+). Its pathway is carbohydrate degradation; glycolysis; pyruvate from D-glyceraldehyde 3-phosphate: step 1/5. The sequence is that of Glyceraldehyde-3-phosphate dehydrogenase 3.1 from Caenorhabditis briggsae.